A 296-amino-acid polypeptide reads, in one-letter code: Elongation factor Ts (296 aa).

Positions 79–82 (TDFV) are involved in Mg(2+) ion dislocation from EF-Tu.

This sequence belongs to the EF-Ts family.

Its subcellular location is the cytoplasm. Its function is as follows. Associates with the EF-Tu.GDP complex and induces the exchange of GDP to GTP. It remains bound to the aminoacyl-tRNA.EF-Tu.GTP complex up to the GTP hydrolysis stage on the ribosome. This chain is Elongation factor Ts, found in Paracoccus denitrificans (strain Pd 1222).